The chain runs to 81 residues: Sulfur carrier protein TusA (81 aa).

The Cysteine persulfide intermediate role is filled by cysteine 19.

The protein belongs to the sulfur carrier protein TusA family. Interacts with IscS.

It is found in the cytoplasm. It participates in tRNA modification. Functionally, sulfur carrier protein involved in sulfur trafficking in the cell. Part of a sulfur-relay system required for 2-thiolation during synthesis of 2-thiouridine of the modified wobble base 5-methylaminomethyl-2-thiouridine (mnm(5)s(2)U) in tRNA. Interacts with IscS and stimulates its cysteine desulfurase activity. Accepts an activated sulfur from IscS, which is then transferred to TusD, and thus determines the direction of sulfur flow from IscS to 2-thiouridine formation. Also appears to be involved in sulfur transfer for the biosynthesis of molybdopterin. The sequence is that of Sulfur carrier protein TusA from Enterobacter sp. (strain 638).